A 381-amino-acid polypeptide reads, in one-letter code: 1-deoxy-D-xylulose 5-phosphate reductoisomerase (381 aa).

NADPH is bound by residues Thr-10, Gly-11, Ser-12, Ile-13, Asn-38, and Asn-121. Lys-122 provides a ligand contact to 1-deoxy-D-xylulose 5-phosphate. NADPH is bound at residue Glu-123. Asp-147 serves as a coordination point for Mn(2+). 4 residues coordinate 1-deoxy-D-xylulose 5-phosphate: Ser-148, Glu-149, Ser-173, and His-196. Glu-149 contacts Mn(2+). Gly-202 contributes to the NADPH binding site. Positions 209, 214, 215, and 218 each coordinate 1-deoxy-D-xylulose 5-phosphate. Glu-218 contributes to the Mn(2+) binding site.

The protein belongs to the DXR family. The cofactor is Mg(2+). Requires Mn(2+) as cofactor.

The enzyme catalyses 2-C-methyl-D-erythritol 4-phosphate + NADP(+) = 1-deoxy-D-xylulose 5-phosphate + NADPH + H(+). Its pathway is isoprenoid biosynthesis; isopentenyl diphosphate biosynthesis via DXP pathway; isopentenyl diphosphate from 1-deoxy-D-xylulose 5-phosphate: step 1/6. Functionally, catalyzes the NADPH-dependent rearrangement and reduction of 1-deoxy-D-xylulose-5-phosphate (DXP) to 2-C-methyl-D-erythritol 4-phosphate (MEP). The polypeptide is 1-deoxy-D-xylulose 5-phosphate reductoisomerase (Alkaliphilus oremlandii (strain OhILAs) (Clostridium oremlandii (strain OhILAs))).